Consider the following 50-residue polypeptide: Sproutin (50 aa).

Ser8 is subject to Phosphoserine; by PKC.

Brain.

Functionally, neurite outgrowth factor. The polypeptide is Sproutin (Rattus norvegicus (Rat)).